Consider the following 96-residue polypeptide: Teretoxin Tan6.14 (96 aa).

Residues 1 to 21 (MRPLLVFVLMVSVSLAFSLEG) form the signal peptide. Residues 22–60 (MPNNGGDSVASITANQARRFKRNPLFSFAQHSLVDLKAR) constitute a propeptide that is removed on maturation.

Contains 3 disulfide bonds. Expressed by the venom duct.

Its subcellular location is the secreted. The sequence is that of Teretoxin Tan6.14 from Terebra anilis (Auger snail).